The chain runs to 304 residues: Tegument protein VP22 (304 aa).

Disordered regions lie at residues 23–68 (YSTV…PNDD) and 112–184 (STSN…GTPK). The span at 43–58 (RENDLYDKQSVSKEND) shows a compositional bias: basic and acidic residues. Residues 123-142 (AQPPPRGAAAAPPPRVPTRP) show a composition bias toward pro residues. Low complexity predominate over residues 143-154 (PTRAAATSTTPR). The short motif at 160–163 (PKQR) is the Nuclear localization signal element. Residues 233–245 (LDRFLKAAAIRIL) carry the Nuclear export signal motif. The interval 262-304 (STPDGYAAAGPNGYDRRPRTASRRRSLKCKPPADDFFDDTNSG) is disordered. Positions 280-289 (RTASRRRSLK) are enriched in basic residues.

Belongs to the alphaherpesvirinae VP22 tegument protein family. In terms of assembly, interacts with gE (via C-terminus); this interaction is necessary for the recruitment of VP22 to the Golgi and its packaging into virions. Interacts with gM (via C-terminus). Interacts with VP16; this interaction allows the formation of a tripartite complex composed of VP16, VP22 and UL41/VHS. Interacts with the capsid-binding protein UL16. Interacts with host CGAS. In terms of processing, highly phosphorylated in the host cell. Packaging is selective for underphosphorylated forms.

Its subcellular location is the virion tegument. It localises to the host cytoplasm. It is found in the host nucleus. The protein resides in the host Golgi apparatus. In terms of biological role, tegument protein that plays different roles during the time course of infection. Participates in both the accumulation of viral mRNAs and viral protein translation at late time of infection. Modulates the RNase activity of the virion host shutoff protein UL41 probably to ensure necessary levels of key cellular mRNAs and proteins. Plays a role in microtubule reorganization that occurs after viral infection by stabilizing microtubule network. Plays a role in the inhibition of host innate immune system by targeting the CGAS enzymatic activity which is the principal cytosolic DNA sensor that detects invading viral DNA. Acts by mediating disruption of liquid-like droplets in which CGAS is activated, thereby preventing CGAS activity. The polypeptide is Tegument protein VP22 (Equine herpesvirus 1 (strain Ab4p) (EHV-1)).